A 240-amino-acid polypeptide reads, in one-letter code: UDP-2,3-diacylglucosamine hydrolase (240 aa).

Positions 8, 10, 41, 79, and 114 each coordinate Mn(2+). 79 to 80 (NR) is a substrate binding site. Substrate contacts are provided by D122, S160, N164, K167, and H195. Residues H195 and H197 each coordinate Mn(2+).

The protein belongs to the LpxH family. The cofactor is Mn(2+).

The protein localises to the cell inner membrane. It carries out the reaction UDP-2-N,3-O-bis[(3R)-3-hydroxytetradecanoyl]-alpha-D-glucosamine + H2O = 2-N,3-O-bis[(3R)-3-hydroxytetradecanoyl]-alpha-D-glucosaminyl 1-phosphate + UMP + 2 H(+). The protein operates within glycolipid biosynthesis; lipid IV(A) biosynthesis; lipid IV(A) from (3R)-3-hydroxytetradecanoyl-[acyl-carrier-protein] and UDP-N-acetyl-alpha-D-glucosamine: step 4/6. Functionally, hydrolyzes the pyrophosphate bond of UDP-2,3-diacylglucosamine to yield 2,3-diacylglucosamine 1-phosphate (lipid X) and UMP by catalyzing the attack of water at the alpha-P atom. Involved in the biosynthesis of lipid A, a phosphorylated glycolipid that anchors the lipopolysaccharide to the outer membrane of the cell. The chain is UDP-2,3-diacylglucosamine hydrolase from Enterobacter sp. (strain 638).